The following is an 862-amino-acid chain: Probable inorganic carbon transporter subunit DabA (862 aa).

4 residues coordinate Zn(2+): C365, D367, H540, and C555.

The protein belongs to the inorganic carbon transporter (TC 9.A.2) DabA family. As to quaternary structure, forms a complex with DabB. Zn(2+) serves as cofactor.

It is found in the cell inner membrane. Its function is as follows. Part of an energy-coupled inorganic carbon pump. The sequence is that of Probable inorganic carbon transporter subunit DabA from Vibrio cholerae serotype O1 (strain ATCC 39315 / El Tor Inaba N16961).